A 215-amino-acid polypeptide reads, in one-letter code: Probable phosphoglycerate mutase GpmB (215 aa).

Substrate contacts are provided by residues 8-15, 21-22, arginine 58, lysine 60, 82-85, 104-105, and 151-152; these read RHGETQWN, QG, ELDM, RR, and GI. Histidine 9 acts as the Tele-phosphohistidine intermediate in catalysis. Glutamate 82 functions as the Proton donor/acceptor in the catalytic mechanism.

Belongs to the phosphoglycerate mutase family. GpmB subfamily.

It catalyses the reaction (2R)-2-phosphoglycerate = (2R)-3-phosphoglycerate. The protein operates within carbohydrate degradation; glycolysis; pyruvate from D-glyceraldehyde 3-phosphate: step 3/5. The sequence is that of Probable phosphoglycerate mutase GpmB from Salmonella choleraesuis (strain SC-B67).